A 190-amino-acid polypeptide reads, in one-letter code: Putative triphosphatase YjbK (190 aa).

One can recognise a CYTH domain in the interval 4–189; it reads EIEIEFKNML…LRFYEEKRKS (186 aa).

The chain is Putative triphosphatase YjbK (yjbK) from Bacillus subtilis (strain 168).